Here is a 364-residue protein sequence, read N- to C-terminus: MGAKKHTLQVLPWLLLFAQHTAASACDCANTTDGADRQGAMKLKLIAIASILAAGAAGVLVPVIGRSMAALRPDGDIFFAVKAFAAGVILATGMVHILPAAFDALTSPCLKRGGGDRNPFPFAGLVSMSAAVSTMVVDSLAAGYYHRSQFRKARPVDNINVHKHAGDERAEHAQHINAHTHGGHTHSHGDIVVCGSPEEGSVAESIRHKVVSQVLELGILVHSVIIGVSLGASVRPSTIRPLVGALSFHQFFEGVGLGGCIVQANFKVRATVIMAIFFSLTAPVGIVLGIAISSSYNVHSSTAFVVEGVFNSASAGILIYMSLVDLLATDFNNPKLQINTKLQLMAYLALFLGAGLMSMLAIWA.

Positions 1–23 (MGAKKHTLQVLPWLLLFAQHTAA) are cleaved as a signal peptide. The Extracellular segment spans residues 24–44 (SACDCANTTDGADRQGAMKLK). N-linked (GlcNAc...) asparagine glycosylation occurs at Asn30. Residues 45–65 (LIAIASILAAGAAGVLVPVIG) traverse the membrane as a helical segment. Residues 66-76 (RSMAALRPDGD) lie on the Cytoplasmic side of the membrane. The helical transmembrane segment at 77–97 (IFFAVKAFAAGVILATGMVHI) threads the bilayer. At 98–119 (LPAAFDALTSPCLKRGGGDRNP) the chain is on the extracellular side. Residues 120 to 140 (FPFAGLVSMSAAVSTMVVDSL) traverse the membrane as a helical segment. At 141–213 (AAGYYHRSQF…ESIRHKVVSQ (73 aa)) the chain is on the cytoplasmic side. Residues 214–234 (VLELGILVHSVIIGVSLGASV) form a helical membrane-spanning segment. Over 235–241 (RPSTIRP) the chain is Extracellular. Residues 242-262 (LVGALSFHQFFEGVGLGGCIV) form a helical membrane-spanning segment. Residues 263–271 (QANFKVRAT) are Cytoplasmic-facing. A helical membrane pass occupies residues 272 to 292 (VIMAIFFSLTAPVGIVLGIAI). Topologically, residues 293 to 303 (SSSYNVHSSTA) are extracellular. The chain crosses the membrane as a helical span at residues 304–324 (FVVEGVFNSASAGILIYMSLV). Over 325–343 (DLLATDFNNPKLQINTKLQ) the chain is Cytoplasmic. The chain crosses the membrane as a helical span at residues 344-364 (LMAYLALFLGAGLMSMLAIWA).

This sequence belongs to the ZIP transporter (TC 2.A.5) family. In terms of tissue distribution, expressed in vascular bundles of stems.

The protein resides in the cell membrane. Functionally, zinc transporter that may mediate zinc uptake from the rhizosphere. Seems specific to zinc ions and may not transport other divalent cations. This Oryza sativa subsp. japonica (Rice) protein is Zinc transporter 3 (ZIP3).